A 79-amino-acid polypeptide reads, in one-letter code: Translational regulator CsrA (79 aa).

Belongs to the CsrA/RsmA family. As to quaternary structure, homodimer; the beta-strands of each monomer intercalate to form a hydrophobic core, while the alpha-helices form wings that extend away from the core.

It is found in the cytoplasm. A translational regulator that binds mRNA to regulate translation initiation and/or mRNA stability. Usually binds in the 5'-UTR at or near the Shine-Dalgarno sequence preventing ribosome-binding, thus repressing translation. Its main target seems to be the major flagellin gene, while its function is anatagonized by FliW. This is Translational regulator CsrA from Geobacter sulfurreducens (strain ATCC 51573 / DSM 12127 / PCA).